The chain runs to 265 residues: Arcelin-2 (265 aa).

Residues 1 to 21 form the signal peptide; that stretch reads MASSNLLTLALFLVLLTHANS. Residues N33 and N89 are each glycosylated (N-linked (GlcNAc...) asparagine). C165 and C201 are joined by a disulfide.

It belongs to the leguminous lectin family.

Seed storage. This carbohydrate-binding lectin has toxic effects on bean bruchid pests. Antibiosis properties of legume lectins are proposed to be due to the lysis of epithelial cells of the intestine by binding to the carbohydrate moieties of these proteins. The protein is Arcelin-2 (ARC2) of Phaseolus vulgaris (Kidney bean).